We begin with the raw amino-acid sequence, 380 residues long: MAPNLRKHHPLLKMVNNSLIDLPTPSNISAWWNFGSLLGICLMTQILTGLLLAMHYTADTSLAFTSVAHTCRNVQFGWLIRNLHANGASLFFICIYLHIGRGFYYGSYLYKETWNTGVILLLTLMATAFVGYVLPWGQMSFWGATVITNLFSAIPYIGQTLVEWAWGGFSVDNPTLTRFFALHFLLPFIIAGLTLIHLTFLHETGSNNPLGISSNCDKIPFHPYFSTKDILGFIILLLPLMTLAMFAPNFLGDPENFTPANPLVTPPHIKPEWYFLFAYAILRSIPNKLGGVLALAASVLVLFLAPFLHMSKQRTMTFRPLSQLLFWTLVANLFILTWIGSQPVEHPFIITGQLASLTYFTILLILFPITGMLENKLLKL.

Transmembrane regions (helical) follow at residues Phe-34–Met-54, Trp-78–Ile-99, Trp-114–Leu-134, and Phe-179–Thr-199. Residues His-84 and His-98 each contribute to the heme b site. His-183 and His-197 together coordinate heme b. Residue His-202 coordinates a ubiquinone. Helical transmembrane passes span Thr-227–Ala-247, Leu-289–His-309, Leu-321–Ser-341, and Phe-348–Pro-368.

The protein belongs to the cytochrome b family. In terms of assembly, the cytochrome bc1 complex contains 11 subunits: 3 respiratory subunits (MT-CYB, CYC1 and UQCRFS1), 2 core proteins (UQCRC1 and UQCRC2) and 6 low-molecular weight proteins (UQCRH/QCR6, UQCRB/QCR7, UQCRQ/QCR8, UQCR10/QCR9, UQCR11/QCR10 and a cleavage product of UQCRFS1). This cytochrome bc1 complex then forms a dimer. The cofactor is heme b.

Its subcellular location is the mitochondrion inner membrane. Its function is as follows. Component of the ubiquinol-cytochrome c reductase complex (complex III or cytochrome b-c1 complex) that is part of the mitochondrial respiratory chain. The b-c1 complex mediates electron transfer from ubiquinol to cytochrome c. Contributes to the generation of a proton gradient across the mitochondrial membrane that is then used for ATP synthesis. The sequence is that of Cytochrome b (MT-CYB) from Aphanotriccus audax (Black-billed flycatcher).